The chain runs to 187 residues: Potassium-transporting ATPase KdpC subunit (187 aa).

A helical transmembrane segment spans residues 11-31 (LILLMTVVTGALYPLAVTGIA).

It belongs to the KdpC family. The system is composed of three essential subunits: KdpA, KdpB and KdpC.

The protein localises to the cell inner membrane. Functionally, part of the high-affinity ATP-driven potassium transport (or Kdp) system, which catalyzes the hydrolysis of ATP coupled with the electrogenic transport of potassium into the cytoplasm. This subunit acts as a catalytic chaperone that increases the ATP-binding affinity of the ATP-hydrolyzing subunit KdpB by the formation of a transient KdpB/KdpC/ATP ternary complex. This Pseudomonas entomophila (strain L48) protein is Potassium-transporting ATPase KdpC subunit.